Here is a 494-residue protein sequence, read N- to C-terminus: Cytochrome P450 2A3 (494 aa).

Phosphoserine is present on serine 131. Lysine 379 carries the N6-acetyllysine modification. Position 439 (cysteine 439) interacts with heme.

The protein belongs to the cytochrome P450 family. The cofactor is heme. In terms of tissue distribution, lung.

Its subcellular location is the endoplasmic reticulum membrane. It localises to the microsome membrane. The enzyme catalyses an organic molecule + reduced [NADPH--hemoprotein reductase] + O2 = an alcohol + oxidized [NADPH--hemoprotein reductase] + H2O + H(+). Cytochromes P450 are a group of heme-thiolate monooxygenases. In liver microsomes, this enzyme is involved in an NADPH-dependent electron transport pathway. It oxidizes a variety of structurally unrelated compounds, including steroids, fatty acids, and xenobiotics. This Rattus norvegicus (Rat) protein is Cytochrome P450 2A3 (Cyp2a3).